Reading from the N-terminus, the 187-residue chain is Adenine phosphoribosyltransferase (187 aa).

The protein belongs to the purine/pyrimidine phosphoribosyltransferase family. As to quaternary structure, homodimer.

The protein resides in the cytoplasm. It catalyses the reaction AMP + diphosphate = 5-phospho-alpha-D-ribose 1-diphosphate + adenine. It functions in the pathway purine metabolism; AMP biosynthesis via salvage pathway; AMP from adenine: step 1/1. Its function is as follows. Catalyzes a salvage reaction resulting in the formation of AMP, that is energically less costly than de novo synthesis. The protein is Adenine phosphoribosyltransferase of Yersinia pseudotuberculosis serotype I (strain IP32953).